A 152-amino-acid polypeptide reads, in one-letter code: Transcriptional regulator MraZ (152 aa).

2 SpoVT-AbrB domains span residues 5 to 52 and 81 to 124; these read ASAI…PLQE and AHEC…DEAA.

This sequence belongs to the MraZ family. Forms oligomers.

The protein resides in the cytoplasm. The protein localises to the nucleoid. The polypeptide is Transcriptional regulator MraZ (Shewanella denitrificans (strain OS217 / ATCC BAA-1090 / DSM 15013)).